The following is a 1005-amino-acid chain: Espin-like protein (1005 aa).

ANK repeat units lie at residues 1-31 (MEAQ…RPDI), 35-64 (LGAG…LPGN), 69-99 (NGAT…GLQD), 103-132 (SGVS…AATL), 136-166 (EGAL…GVNQ), 170-200 (SGAS…DVRL), 204-234 (DGMS…GLTA), 238-267 (EGAT…PIMR), 270-299 (WGGT…DPFL), and 303-332 (DGYT…PVRV). Disordered stretches follow at residues 355 to 383 (EERR…VPRE) and 458 to 480 (ADHP…AAEQ). Over residues 458–469 (ADHPPEDQDQSQ) the composition is skewed to basic and acidic residues. A coiled-coil region spans residues 502–539 (EDDLVYLEKQINDLQLRRRCQEYESELGRLAAQLQALL). Disordered stretches follow at residues 611–643 (LAQG…QREI), 692–729 (PRGD…GPGL), 764–794 (LEAQ…PRLG), and 951–975 (PHAS…SQGS).

As to quaternary structure, interacts with MYO3A (via C-terminus). Interacts with MYO3B (via C-terminus). Expressed in inner ear hair cells. Expressed in utricle hair bundles (at protein level). Expressed in choclea (at protein level).

Its subcellular location is the cell projection. The protein resides in the stereocilium. Its function is as follows. Binds to but does not cross-link actin. Required for the formation and maintenance of inner ear hair cell stereocilia and staircase formation. Essential for normal hearing. In Mus musculus (Mouse), this protein is Espin-like protein (Espnl).